The sequence spans 541 residues: GPI alpha-1,2-mannosyltransferase 3 (541 aa).

The N-linked (GlcNAc...) asparagine glycan is linked to N18. 9 helical membrane-spanning segments follow: residues 53-73 (LVLF…TSFV), 126-146 (VHLL…IADL), 182-202 (LTNT…PLEG), 214-234 (LVAL…PLLF), 245-265 (DLIL…SLII), 305-325 (GFPA…FLAP), 330-350 (IFLV…HKEF), 352-372 (FIYP…NNLK), and 377-397 (PALS…GLVH). N-linked (GlcNAc...) asparagine glycosylation occurs at N417.

Belongs to the glycosyltransferase 22 family. PIGB subfamily.

The protein localises to the endoplasmic reticulum membrane. Its pathway is glycolipid biosynthesis; glycosylphosphatidylinositol-anchor biosynthesis. In terms of biological role, alpha-1,2-mannosyltransferase that catalyzes the transfer of the third mannose, via an alpha-1,2 bond, from a dolichol-phosphate-mannose (Dol-P-Man) to an alpha-D-Man-(1-&gt;6)-2-PEtn-alpha-D-Man-(1-&gt;4)-alpha-D-GlcN-(1-&gt;6)-(1-radyl,2-acyl-sn-glycero-3-phospho)-2-acyl-inositol intermediate to generate an alpha-D-Man-(1-&gt;2)-alpha-D-Man-(1-&gt;6)-2-PEtn-alpha-D-Man-(1-&gt;4)-alpha-D-GlcN-(1-&gt;6)-(1-radyl,2-acyl-sn-glycero-3-phospho)-2-acyl-inositol (also termed H6) and participates in the nineth step of the glycosylphosphatidylinositol-anchor biosynthesis. May also add the third mannose to an alpha-D-Man-(1-&gt;6)-alpha-D-Man-(1-&gt;4)-alpha-D-GlcN-(1-&gt;6)-(1-radyl,2-acyl-sn-glycero-3-phospho)-2-acyl-inositol (also termed H3) intermediate generating an alpha-D-Man-(1-&gt;2)-alpha-D-Man-(1-&gt;6)-alpha-D-Man-(1-&gt;4)-alpha-D-GlcN-(1-&gt;6)-(1-radyl,2-acyl-sn-glycero-3-phospho)-2-acyl-inositol (also termed H4). The sequence is that of GPI alpha-1,2-mannosyltransferase 3 from Bos taurus (Bovine).